The primary structure comprises 370 residues: Adaptive-response sensory kinase SasA (370 aa).

The region spanning 152-365 is the Histidine kinase domain; that stretch reads MVAHELRTPL…CFYLTVPVWQ (214 aa). At His-155 the chain carries Phosphohistidine; by autocatalysis.

In terms of assembly, homooligomerizes. Interacts with KaiC. Participates in the KaiBC complex, whose core is composed of a KaiC homohexamer and 6 KaiB.

It carries out the reaction ATP + protein L-histidine = ADP + protein N-phospho-L-histidine.. In terms of biological role, member of the two-component regulatory system SasA/RpaA involved in genome-wide circadian gene expression. One of several clock output pathways. Participates in the Kai clock protein complex, the main circadian regulator in cyanobacteria, via its interaction with KaiC. KaiC enhances the autophosphorylation activity of SasA, which then transfers its phosphate group to RpaA to activate it. In addition to its output function, recruits fold-shifted KaiB (KaiB(fs)) to KaiC to cooperatively form the KaiB(6):KaiC(6) complex (independent of SasA kinase activity). Required for robustness of the circadian rhythm of gene expression and is involved in clock output, also required for adaptation to light/dark cycles. The polypeptide is Adaptive-response sensory kinase SasA (Prochlorococcus marinus (strain MIT 9303)).